The following is a 136-amino-acid chain: Transmembrane protein 203 (136 aa).

4 helical membrane passes run 14–34 (FAQL…VLLA), 50–72 (FIPF…VRLF), 81–101 (VLRL…EMLL), and 112–132 (LWFG…MIRA).

The protein resides in the endoplasmic reticulum membrane. It localises to the endoplasmic reticulum-Golgi intermediate compartment. In terms of biological role, involved in the regulation of cellular calcium homeotasis. May act as a regulator of STING-mediated inflammatory signaling in macrophages. The polypeptide is Transmembrane protein 203 (tmem203) (Xenopus tropicalis (Western clawed frog)).